Reading from the N-terminus, the 110-residue chain is Nucleoid-associated protein ESA_02800 (110 aa).

The tract at residues 89–110 (QKEKMASVSSGMQLPPGFKMPF) is disordered.

This sequence belongs to the YbaB/EbfC family. In terms of assembly, homodimer.

The protein localises to the cytoplasm. The protein resides in the nucleoid. In terms of biological role, binds to DNA and alters its conformation. May be involved in regulation of gene expression, nucleoid organization and DNA protection. The protein is Nucleoid-associated protein ESA_02800 of Cronobacter sakazakii (strain ATCC BAA-894) (Enterobacter sakazakii).